An 858-amino-acid polypeptide reads, in one-letter code: Leucine--tRNA ligase (858 aa).

Residues 42-52 (PYPSGRLHMGH) carry the 'HIGH' region motif. The short motif at 618–622 (KMSKS) is the 'KMSKS' region element. K621 contributes to the ATP binding site.

Belongs to the class-I aminoacyl-tRNA synthetase family.

The protein resides in the cytoplasm. It carries out the reaction tRNA(Leu) + L-leucine + ATP = L-leucyl-tRNA(Leu) + AMP + diphosphate. This chain is Leucine--tRNA ligase, found in Aeromonas salmonicida (strain A449).